The sequence spans 208 residues: Ribosomal RNA small subunit methyltransferase J (208 aa).

Residues 54–55 (RD), 70–71 (ER), and D122 contribute to the S-adenosyl-L-methionine site.

This sequence belongs to the methyltransferase superfamily. RsmJ family.

The protein localises to the cytoplasm. The enzyme catalyses guanosine(1516) in 16S rRNA + S-adenosyl-L-methionine = N(2)-methylguanosine(1516) in 16S rRNA + S-adenosyl-L-homocysteine + H(+). In terms of biological role, specifically methylates the guanosine in position 1516 of 16S rRNA. This chain is Ribosomal RNA small subunit methyltransferase J, found in Agrobacterium fabrum (strain C58 / ATCC 33970) (Agrobacterium tumefaciens (strain C58)).